The sequence spans 69 residues: MLSSRTSSIILILAILVAIMAVAQCRNIQYDVEEMTPEAAFRYAQWGEIPHKRVPSAGDMMVRFGKRSI.

Positions 1–25 (MLSSRTSSIILILAILVAIMAVAQC) are cleaved as a signal peptide. A propeptide spanning residues 26–51 (RNIQYDVEEMTPEAAFRYAQWGEIPH) is cleaved from the precursor. Phe64 is subject to Phenylalanine amide. A propeptide spanning residues 68 to 69 (SI) is cleaved from the precursor.

It belongs to the FARP (FMRFamide related peptide) family.

Its subcellular location is the secreted. In terms of biological role, probable FMRFamide-like neuropeptides. Plays a role in behaviors associated with a sleep-like state induced by stress (SIS), acting in concert with the FMRFamide related peptide flp-13 and neuropeptide-like protein nlp-8. This is FMRFamide-like neuropeptides 24 from Caenorhabditis elegans.